The primary structure comprises 127 residues: MDATTTAKRKRPAASDIADDAPTTVDEVSDAEVEEFYAILRRMRDATRRLGARPPPPRAPAWRPSFSWEDFADAPPKQAPPPPQQPADHERVAENATPPRRPAPGLDLNVEPPSDAPATPRSARAPA.

Disordered stretches follow at residues 1 to 28 and 47 to 127; these read MDATTTAKRKRPAASDIADDAPTTVDEV and TRRL…RAPA. Residues 112 to 127 are compositionally biased toward low complexity; sequence PPSDAPATPRSARAPA.

The protein belongs to the NPR1-interactor family. In terms of assembly, interacts with NPR1/NH1. Interacts with NPR3/NH3.

It is found in the nucleus. Its function is as follows. Acts as a negative regulator of disease resistance. Acts on basal resistance, age-related resistance and resistance mediated by the LRR receptor kinase XA21. Plants over-expressing NRR display enhanced susceptibility to the bacterial blight Xanthomonas oryzae pv. oryzae (Xoo). Binds to and represses NPR1/NH1-mediated transcriptional activation of LG2 in vitro. This Oryza sativa subsp. japonica (Rice) protein is Protein NEGATIVE REGULATOR OF RESISTANCE.